Reading from the N-terminus, the 542-residue chain is Katanin p60 ATPase-containing subunit A-like 2 (542 aa).

The LisH domain maps to 25-57 (RRKNLLILIMHYLLQEGYMDSANSLEQETKISL). Disordered stretches follow at residues 94–126 (LDHD…RIAQ) and 142–168 (HAHQ…ASEI). Residues 114–126 (GSNSTQGLPRIAQ) show a composition bias toward polar residues. 298 to 305 (GPPGTGKT) serves as a coordination point for ATP.

It belongs to the AAA ATPase family. Katanin p60 subunit A1 subfamily. A-like 2 sub-subfamily.

It localises to the cytoplasm. Its subcellular location is the cytoskeleton. The protein localises to the spindle. It is found in the spindle pole. It catalyses the reaction n ATP + n H2O + a microtubule = n ADP + n phosphate + (n+1) alpha/beta tubulin heterodimers.. Functionally, severs microtubules in vitro in an ATP-dependent manner. This activity may promote rapid reorganization of cellular microtubule arrays. In Xenopus tropicalis (Western clawed frog), this protein is Katanin p60 ATPase-containing subunit A-like 2 (katnal2).